Reading from the N-terminus, the 524-residue chain is Bifunctional purine biosynthesis protein PurH (524 aa).

The 144-residue stretch at methionine 1 to valine 144 folds into the MGS-like domain.

The protein belongs to the PurH family.

It catalyses the reaction (6R)-10-formyltetrahydrofolate + 5-amino-1-(5-phospho-beta-D-ribosyl)imidazole-4-carboxamide = 5-formamido-1-(5-phospho-D-ribosyl)imidazole-4-carboxamide + (6S)-5,6,7,8-tetrahydrofolate. The catalysed reaction is IMP + H2O = 5-formamido-1-(5-phospho-D-ribosyl)imidazole-4-carboxamide. It functions in the pathway purine metabolism; IMP biosynthesis via de novo pathway; 5-formamido-1-(5-phospho-D-ribosyl)imidazole-4-carboxamide from 5-amino-1-(5-phospho-D-ribosyl)imidazole-4-carboxamide (10-formyl THF route): step 1/1. The protein operates within purine metabolism; IMP biosynthesis via de novo pathway; IMP from 5-formamido-1-(5-phospho-D-ribosyl)imidazole-4-carboxamide: step 1/1. This Anaeromyxobacter dehalogenans (strain 2CP-1 / ATCC BAA-258) protein is Bifunctional purine biosynthesis protein PurH.